The following is an 85-amino-acid chain: Large ribosomal subunit protein bL27 (85 aa).

The interval 1–21 is disordered; sequence MAHKKGVGSTRNGRDSESKRL.

The protein belongs to the bacterial ribosomal protein bL27 family.

In Geobacter sulfurreducens (strain ATCC 51573 / DSM 12127 / PCA), this protein is Large ribosomal subunit protein bL27.